Consider the following 831-residue polypeptide: Periplasmic nitrate reductase (831 aa).

The segment at residues 1-31 is a signal peptide (tat-type signal); it reads MKLSRRDFMKANAAVAAAAAAGLTIPTVAKA. A 4Fe-4S Mo/W bis-MGD-type domain is found at 40–96; that stretch reads IKWDKAPCRFCGTGCGVLVGTQNGRIVASQGDPDSPVNRGLNCVKGYFLPKIMYGKD. The [4Fe-4S] cluster site is built by C47, C50, C54, and C82. Residues K84, Q151, N176, C180, 213–220, 244–248, 263–265, M373, Q377, N483, 509–510, K532, D559, and 719–728 each bind Mo-bis(molybdopterin guanine dinucleotide); these read WGSNMAEM, STFEH, QTD, SD, and TGRVLEHWHT. F795 is a binding site for substrate. Mo-bis(molybdopterin guanine dinucleotide)-binding residues include N803 and K820.

This sequence belongs to the prokaryotic molybdopterin-containing oxidoreductase family. NasA/NapA/NarB subfamily. Component of the periplasmic nitrate reductase NapAB complex composed of NapA and NapB. [4Fe-4S] cluster serves as cofactor. The cofactor is Mo-bis(molybdopterin guanine dinucleotide). Post-translationally, predicted to be exported by the Tat system. The position of the signal peptide cleavage has not been experimentally proven.

The protein localises to the periplasm. The catalysed reaction is 2 Fe(II)-[cytochrome] + nitrate + 2 H(+) = 2 Fe(III)-[cytochrome] + nitrite + H2O. In terms of biological role, catalytic subunit of the periplasmic nitrate reductase complex NapAB. Receives electrons from NapB and catalyzes the reduction of nitrate to nitrite. The chain is Periplasmic nitrate reductase from Yersinia enterocolitica serotype O:8 / biotype 1B (strain NCTC 13174 / 8081).